Reading from the N-terminus, the 241-residue chain is Orotidine 5'-phosphate decarboxylase (241 aa).

Substrate contacts are provided by residues Asp-16, Lys-37, 64–73 (DLKFHDIPTT), Thr-128, Arg-190, Gln-199, Gly-219, and Arg-220. The active-site Proton donor is the Lys-66.

Belongs to the OMP decarboxylase family. Type 1 subfamily. Homodimer.

The catalysed reaction is orotidine 5'-phosphate + H(+) = UMP + CO2. The protein operates within pyrimidine metabolism; UMP biosynthesis via de novo pathway; UMP from orotate: step 2/2. Its function is as follows. Catalyzes the decarboxylation of orotidine 5'-monophosphate (OMP) to uridine 5'-monophosphate (UMP). This Prochlorococcus marinus (strain NATL2A) protein is Orotidine 5'-phosphate decarboxylase.